The chain runs to 291 residues: 33 kDa chaperonin (291 aa).

Cystine bridges form between C229–C231 and C262–C265.

The protein belongs to the HSP33 family. Under oxidizing conditions two disulfide bonds are formed involving the reactive cysteines. Under reducing conditions zinc is bound to the reactive cysteines and the protein is inactive.

It is found in the cytoplasm. Redox regulated molecular chaperone. Protects both thermally unfolding and oxidatively damaged proteins from irreversible aggregation. Plays an important role in the bacterial defense system toward oxidative stress. This is 33 kDa chaperonin from Vibrio vulnificus (strain YJ016).